The primary structure comprises 193 residues: Shikimate kinase (193 aa).

An ATP-binding site is contributed by 31–36 (GVGKTT). Thr35 provides a ligand contact to Mg(2+). 3 residues coordinate substrate: Asp53, Arg77, and Gly103. Arg141 serves as a coordination point for ATP. Arg160 provides a ligand contact to substrate. ATP is bound at residue Gln176.

The protein belongs to the shikimate kinase family. As to quaternary structure, monomer. Mg(2+) serves as cofactor.

Its subcellular location is the cytoplasm. The catalysed reaction is shikimate + ATP = 3-phosphoshikimate + ADP + H(+). Its pathway is metabolic intermediate biosynthesis; chorismate biosynthesis; chorismate from D-erythrose 4-phosphate and phosphoenolpyruvate: step 5/7. Its function is as follows. Catalyzes the specific phosphorylation of the 3-hydroxyl group of shikimic acid using ATP as a cosubstrate. This Novosphingobium aromaticivorans (strain ATCC 700278 / DSM 12444 / CCUG 56034 / CIP 105152 / NBRC 16084 / F199) protein is Shikimate kinase.